The following is a 363-amino-acid chain: Pyrimidine monooxygenase RutA (363 aa).

FMN contacts are provided by residues 49-50 (IK), N115, E124, 140-141 (RY), and S190.

The protein belongs to the NtaA/SnaA/DszA monooxygenase family. RutA subfamily.

The enzyme catalyses uracil + FMNH2 + NADH + O2 = (Z)-3-ureidoacrylate + FMN + NAD(+) + H2O + H(+). The catalysed reaction is thymine + FMNH2 + NADH + O2 = (Z)-2-methylureidoacrylate + FMN + NAD(+) + H2O + H(+). Its function is as follows. Catalyzes the pyrimidine ring opening between N-3 and C-4 by an unusual flavin hydroperoxide-catalyzed mechanism, adding oxygen atoms in the process to yield ureidoacrylate peracid, that immediately reacts with FMN forming ureidoacrylate and FMN-N(5)-oxide. The FMN-N(5)-oxide reacts spontaneously with NADH to produce FMN. Requires the flavin reductase RutF to regenerate FMN in vivo. The protein is Pyrimidine monooxygenase RutA of Klebsiella pneumoniae subsp. pneumoniae (strain ATCC 700721 / MGH 78578).